Here is a 285-residue protein sequence, read N- to C-terminus: Dihydropteroate synthase (285 aa).

One can recognise a Pterin-binding domain in the interval 18–276 (PKIMGIVNLT…DVKATADALK (259 aa)). Mg(2+) is bound at residue Asn25. (7,8-dihydropterin-6-yl)methyl diphosphate contacts are provided by residues Thr66, Asp99, Asn119, Asp190, Lys229, and 264-266 (RVH).

Belongs to the DHPS family. Homodimer. Requires Mg(2+) as cofactor.

The catalysed reaction is (7,8-dihydropterin-6-yl)methyl diphosphate + 4-aminobenzoate = 7,8-dihydropteroate + diphosphate. Its pathway is cofactor biosynthesis; tetrahydrofolate biosynthesis; 7,8-dihydrofolate from 2-amino-4-hydroxy-6-hydroxymethyl-7,8-dihydropteridine diphosphate and 4-aminobenzoate: step 1/2. Functionally, catalyzes the condensation of para-aminobenzoate (pABA) with 6-hydroxymethyl-7,8-dihydropterin diphosphate (DHPt-PP) to form 7,8-dihydropteroate (H2Pte), the immediate precursor of folate derivatives. This chain is Dihydropteroate synthase (folP), found in Neisseria meningitidis serogroup B (strain ATCC BAA-335 / MC58).